A 300-amino-acid chain; its full sequence is Succinate--CoA ligase [ADP-forming] subunit alpha (300 aa).

Residues threonine 17–threonine 20, lysine 43, and isoleucine 96–glutamate 98 contribute to the CoA site. Tyrosine 159 provides a ligand contact to substrate. Catalysis depends on histidine 247, which acts as the Tele-phosphohistidine intermediate.

It belongs to the succinate/malate CoA ligase alpha subunit family. In terms of assembly, heterotetramer of two alpha and two beta subunits.

It carries out the reaction succinate + ATP + CoA = succinyl-CoA + ADP + phosphate. The catalysed reaction is GTP + succinate + CoA = succinyl-CoA + GDP + phosphate. It functions in the pathway carbohydrate metabolism; tricarboxylic acid cycle; succinate from succinyl-CoA (ligase route): step 1/1. In terms of biological role, succinyl-CoA synthetase functions in the citric acid cycle (TCA), coupling the hydrolysis of succinyl-CoA to the synthesis of either ATP or GTP and thus represents the only step of substrate-level phosphorylation in the TCA. The alpha subunit of the enzyme binds the substrates coenzyme A and phosphate, while succinate binding and nucleotide specificity is provided by the beta subunit. This is Succinate--CoA ligase [ADP-forming] subunit alpha from Bacillus subtilis (strain 168).